The following is a 220-amino-acid chain: Serine protease-like protein 51 (220 aa).

The signal sequence occupies residues 1–16; that stretch reads MFQLLIPLLLALKGHA. In terms of domain architecture, Peptidase S1 spans 23-220; it reads VQCGHRPAFP…SSKWVSSVGA (198 aa). A glycan (N-linked (GlcNAc...) asparagine) is linked at N33. A disulfide bond links C64 and C80. An N-linked (GlcNAc...) asparagine glycan is attached at N92. Cysteines 157 and 170 form a disulfide.

Belongs to the peptidase S1 family.

It localises to the secreted. The protein is Serine protease-like protein 51 of Homo sapiens (Human).